The primary structure comprises 669 residues: UvrABC system protein B (669 aa).

A Helicase ATP-binding domain is found at 26–183; it reads TNFHAGIAKQ…RHLTELQYTR (158 aa). 39–46 is a binding site for ATP; that stretch reads GVTGSGKT. The Beta-hairpin signature appears at 92-115; it reads YYDYYQPEAYVPASDTFIEKDSSI. The Helicase C-terminal domain occupies 431–597; it reads QVDDLISQIN…SVVRPISDIL (167 aa). The UVR domain maps to 631-666; that stretch reads AAQMKMLEQQMYQHARDLEFEDAARIRDQIQRLREA.

This sequence belongs to the UvrB family. As to quaternary structure, forms a heterotetramer with UvrA during the search for lesions. Interacts with UvrC in an incision complex.

It localises to the cytoplasm. Its function is as follows. The UvrABC repair system catalyzes the recognition and processing of DNA lesions. A damage recognition complex composed of 2 UvrA and 2 UvrB subunits scans DNA for abnormalities. Upon binding of the UvrA(2)B(2) complex to a putative damaged site, the DNA wraps around one UvrB monomer. DNA wrap is dependent on ATP binding by UvrB and probably causes local melting of the DNA helix, facilitating insertion of UvrB beta-hairpin between the DNA strands. Then UvrB probes one DNA strand for the presence of a lesion. If a lesion is found the UvrA subunits dissociate and the UvrB-DNA preincision complex is formed. This complex is subsequently bound by UvrC and the second UvrB is released. If no lesion is found, the DNA wraps around the other UvrB subunit that will check the other stand for damage. The sequence is that of UvrABC system protein B from Xylella fastidiosa (strain M12).